The following is a 38-amino-acid chain: Mu-agatoxin-Hc1c (38 aa).

Disulfide bonds link cysteine 3-cysteine 19, cysteine 10-cysteine 24, cysteine 18-cysteine 34, and cysteine 26-cysteine 32. The residue at position 38 (serine 38) is a Serine amide.

This sequence belongs to the neurotoxin 07 (Beta/delta-agtx) family. 02 (aga-3) subfamily. Expressed by the venom gland.

The protein resides in the secreted. Functionally, insecticidal neurotoxin that induces irreversible neuromuscular blockade in house crickets (A.domesticus). Modifies presynaptic voltage-gated sodium channels (Nav), causing them to open at the normal resting potential of the nerve. This leads to spontaneous release of neurotransmitter and repetitive action potentials in motor neurons. The chain is Mu-agatoxin-Hc1c from Hololena curta (Funnel-web spider).